The primary structure comprises 851 residues: MAKTNISPGMQQYLDIKKDYPDAFLLFRMGDFYELFYEDAVKAAQLLEIGLTSRNKNAENPIPMAGVPHHSAQQYIDVLIELGYKVAVAEQMEDPKQAVGVVKREVVQVITPGTVVDSAKPDSANNFLVAIDFDGCRYGLAYMDVSTGEFCVTDLADFTSVRSEIQNLKAKEVLLGFDLSEEEQTILVKQMNLLLSYEETVYEDKSLIDGQLTTVELTAAGKLLQYVHKTQMRELSHLQALVHYEIKDYLQMSYATKSSLDLVENARTNKKHGSLYWLLDETKTAMGMRLLRSWIDRPLVSKEAILERQEIIQVFLNAFIERTDLSNSLKGVYDIERLSSRVSFGKANPKDLLQLGHTLAQVPYIKAILESFNSAYVDKLVNDIDSLPELEYLIRTAIDPDAPATISEGSIIRNGFDERLDHYRKVMREGTGWIADIEAKERQASGINNLKIDYNKKDGYYFHVTNSNLSLVPDHFFRKATLKNSERYGTAELAKIEGQMLEAREESSSLEYDIFMCIRAQVETYINRLQKLAKILATVDVLQSLAVVAETNHYIRPQFNDNHVITIQEGRHAVVEKVMGVQEYIPNSISFDQQTSIQLITGPNMSGKSTYMRQLALTVIMAQMGSFVAADHVDLPLFDAIFTRIGAADDLISGQSTFMVEMMEANQAIKRASDNSLILFDELGRGTATYDGMALAQAIIEYIHDRVGAKTIFATHYHELTDLSTKLTSLVNVHVATLEKDGDVTFLHKIAEGPADKSYGIHVAKIAGLPKSLLKRADEVLTRLETQSRSTEIMSVPPQVESSSAVRQGQLSLFGDEEKAHEIRQALEAIDVMNMTPLQAMTTLYELKKLL.

602 to 609 (GPNMSGKS) lines the ATP pocket.

This sequence belongs to the DNA mismatch repair MutS family.

This protein is involved in the repair of mismatches in DNA. It is possible that it carries out the mismatch recognition step. This protein has a weak ATPase activity. The chain is DNA mismatch repair protein MutS from Streptococcus pyogenes serotype M4 (strain MGAS10750).